The sequence spans 182 residues: Carbonic anhydrase (182 aa).

Residues His-64, His-81, and His-86 each coordinate Mg(2+).

This sequence belongs to the gamma-class carbonic anhydrase family. In terms of assembly, homotrimer. Mg(2+) is required as a cofactor. Zn(2+) serves as cofactor.

The catalysed reaction is hydrogencarbonate + H(+) = CO2 + H2O. In terms of biological role, reversible hydration of carbon dioxide. This chain is Carbonic anhydrase, found in Geobacillus kaustophilus (strain HTA426).